Reading from the N-terminus, the 340-residue chain is NADH-quinone oxidoreductase subunit H 2 (340 aa).

8 helical membrane-spanning segments follow: residues 10–30, 84–104, 126–146, 172–192, 198–218, 255–275, 279–299, and 318–338; these read LIVA…ILLL, FLFK…FVAI, VALL…IFGG, MGFA…LDIV, VWNI…GLAE, VIVL…WNGI, MPPL…FIWF, and VLLP…GAAA.

This sequence belongs to the complex I subunit 1 family. As to quaternary structure, NDH-1 is composed of 14 different subunits. Subunits NuoA, H, J, K, L, M, N constitute the membrane sector of the complex.

It localises to the cell inner membrane. The enzyme catalyses a quinone + NADH + 5 H(+)(in) = a quinol + NAD(+) + 4 H(+)(out). NDH-1 shuttles electrons from NADH, via FMN and iron-sulfur (Fe-S) centers, to quinones in the respiratory chain. The immediate electron acceptor for the enzyme in this species is believed to be ubiquinone. Couples the redox reaction to proton translocation (for every two electrons transferred, four hydrogen ions are translocated across the cytoplasmic membrane), and thus conserves the redox energy in a proton gradient. This subunit may bind ubiquinone. The chain is NADH-quinone oxidoreductase subunit H 2 from Rhizobium etli (strain ATCC 51251 / DSM 11541 / JCM 21823 / NBRC 15573 / CFN 42).